The primary structure comprises 196 residues: Cupin-domain-containing oxidoreductase srdB (196 aa).

The Cupin type-2 domain maps to 92-156 (DFAPGCKSNM…TSDEKPARML (65 aa)).

Belongs to the virC family.

Functionally, cupin-domain-containing oxidoreductase; part of the gene cluster that mediates the biosynthesis of sordarial, a salicylic aldehyde structurally related to the phytotoxin pyriculol. The most interesting aspect of this pathway is formation of an aromatic product from the highly reducing polyketide synthase srdA. SrdA synthesizes a reduced polyketide chain from one molecule of acetyl-CoA and five molecules of malonyl-CoA. The polyketide chain is then reductively released as an aldehyde. The oxidoreductases srdC, srdD and srdE then oxidize one of the hydroxy groups to facilitate the intramolecular aldol condensation, followed by dehydration to yield a salicylic aldehyde. This aldehyde can undergo facile reduction by endogenous reductases to yield the alcohol 1-hydroxy-2-hydroxymethyl-3-pent-1,3-dienylbenzene. The flavin-dependent srdI counteract against the propensity of the aldehydes to be reduced under physiological conditions and is responsible for reoxidizing 1-hydroxy-2-hydroxymethyl-3-pent-1,3-dienylbenzene back to the salicylic aldehyde. This salicylic aldehyde is then selectively epoxidized by the cupin-domain-containing oxidoreductase srdB to yield the epoxide, which can be hydrolyzed stereoselectively by the hydrolase srdG to give the final product sordarial. The polypeptide is Cupin-domain-containing oxidoreductase srdB (Neurospora crassa (strain ATCC 24698 / 74-OR23-1A / CBS 708.71 / DSM 1257 / FGSC 987)).